A 179-amino-acid chain; its full sequence is Repressor of phase 1 flagellin gene (179 aa).

In terms of biological role, transcriptional repressor of the FliC phase-1 flagellin. This chain is Repressor of phase 1 flagellin gene (fljA), found in Salmonella typhimurium (strain LT2 / SGSC1412 / ATCC 700720).